Here is a 153-residue protein sequence, read N- to C-terminus: Ribonuclease HI (153 aa).

Residues 1–141 (MKSVNIFTDG…CDELAKLGAN (141 aa)) form the RNase H type-1 domain. Asp9, Glu47, Asp69, and Asp133 together coordinate Mg(2+).

It belongs to the RNase H family. Monomer. Requires Mg(2+) as cofactor.

It is found in the cytoplasm. It carries out the reaction Endonucleolytic cleavage to 5'-phosphomonoester.. In terms of biological role, endonuclease that specifically degrades the RNA of RNA-DNA hybrids. The polypeptide is Ribonuclease HI (Haemophilus ducreyi (strain 35000HP / ATCC 700724)).